The primary structure comprises 1182 residues: MDDNEEKKLDENKISKVLSSIPEQYHKTSFQARRTALDYMRSSNRKELLNQIGDWLDEVNVETDNIVDVYFQGFNKSIHNYSRILEFMGTSHGNALLMSKEVEETNKLINFNGTGIERLWKRNLEYYYMIEILEKMEELKKVPDLLNKYIKGNHFVHAANILVNSISTLNERDLVNVNALMDLRQMLVEKKESFKDMLVEKLNDHIYLKTKSSLKAFEYDDENNLQSNFKKILLSNKNSNSNNSNNTFKSPLPPTTTSPFKPQFTGAFQTKASQEKAEKAAANLYNQERLSQSNQPEVLKLEEISKTSNSKEDLNIDPEQDGKLFMTLLVEALNVLEYLSPAVGLILGRISIELKTAITNSITLITNVYHSEGRVIPKMPGESSNSSNGSNGSNGGGNNSMNGSGGINGNGSTASSSSPTSSTSSNIGANGLSPSVLSKNSHIGSATFSNIDEYSAAFNFLTETFNRNDLLANQTHNIPLVDLLKMIFNKVNMVFKNHLQLSKIFNDAIRKSELKIRANKFDFKEETEGGGGDSDNDFEGTPKPTKLQKSKVEIADVYDASLVWEIIQKEIREMLRVHLQDTSSLLLSTKSRLNPDGTESNSGKSQRLFSFTNSIVTDNWNGSISPMVTTSPTSPNGTSGADAIDSNSGGPAVISIFKASQYNVTPIYPMIVKFTDHLDKTLRDRTGTPTTTKTTTTITTTTTNSYHNQNSKKGLLRLYIDDFVHRNFLQHIKNDYKDRFAHSIESTEAFKPLERYKLVFRLKETKPILNSTLQIFQFVIELFSDIVAMSHYVVEFGAIIQVSLLRYYEKCLSKFSQEIDPTLTNQLLNTDLYKYLLASLAVSSKKQDVAKFQDSREEEYEFKLESDLFNHPEKPVLKNQLILNIEKLTMLANMSHSLNWLADKIVQLLIVQEDQKEKYTQQQQQQQQQQQQVDSIKTPSKLNSGINSGGNSTASNKENNSTTTGSNNFIGTFNQMSAESIEALKTMEEPIKDIAQRFKDLSKRCLLALRIEYRIHCFYFLEGFKRAQYMCEEERTDPDSFIVELNKDLSASEEMMSIYLTSDKCNFLFSGIAKLIGKLLISKLVHVNSINDNGVAKLCKNVFTLQQNLSNIIVKREIFFDRIRQFYQALSAEDELLNYLLEKMSQPFFSLEEGKIIIDFLQRTKRISPNAILTLEAKYKNM.

The span at 236 to 250 (NKNSNSNNSNNTFKS) shows a compositional bias: low complexity. Disordered regions lie at residues 236-262 (NKNS…PFKP), 376-427 (IPKM…SSNI), 525-545 (EETE…PKPT), and 921-968 (QQQQ…GSNN). Residues 392 to 409 (GSNGGGNNSMNGSGGING) are compositionally biased toward gly residues. The span at 410–426 (NGSTASSSSPTSSTSSN) shows a compositional bias: low complexity. Positions 921–932 (QQQQQQQQQQQQ) are enriched in low complexity. Residues 933 to 968 (VDSIKTPSKLNSGINSGGNSTASNKENNSTTTGSNN) show a composition bias toward polar residues.

It belongs to the SEC8 family. The exocyst complex is composed of sec3/exoc1, sec5/exoc2, sec6/exoc3, sec8/exoc4, sec10/exoc5, sec15/exoc6, exo70/exoc7 and exo84/exoc8.

Its subcellular location is the midbody. The protein resides in the midbody ring. The protein localises to the cell projection. It is found in the cytoplasm. It localises to the cytoskeleton. Its subcellular location is the microtubule organizing center. The protein resides in the centrosome. Component of the exocyst complex involved in the docking of exocytic vesicles with fusion sites on the plasma membrane. The polypeptide is Exocyst complex component 4 (exoc4) (Dictyostelium discoideum (Social amoeba)).